The sequence spans 352 residues: Lipoyl synthase (352 aa).

The segment at 1 to 21 is disordered; the sequence is MTSVDTPTPHGGTPAPAPATA. Cysteine 71, cysteine 76, cysteine 82, cysteine 97, cysteine 101, cysteine 104, and serine 308 together coordinate [4Fe-4S] cluster. A Radical SAM core domain is found at 83 to 297; that stretch reads WEDREATFLI…SRVAEEIGFA (215 aa).

The protein belongs to the radical SAM superfamily. Lipoyl synthase family. The cofactor is [4Fe-4S] cluster.

It is found in the cytoplasm. It catalyses the reaction [[Fe-S] cluster scaffold protein carrying a second [4Fe-4S](2+) cluster] + N(6)-octanoyl-L-lysyl-[protein] + 2 oxidized [2Fe-2S]-[ferredoxin] + 2 S-adenosyl-L-methionine + 4 H(+) = [[Fe-S] cluster scaffold protein] + N(6)-[(R)-dihydrolipoyl]-L-lysyl-[protein] + 4 Fe(3+) + 2 hydrogen sulfide + 2 5'-deoxyadenosine + 2 L-methionine + 2 reduced [2Fe-2S]-[ferredoxin]. It functions in the pathway protein modification; protein lipoylation via endogenous pathway; protein N(6)-(lipoyl)lysine from octanoyl-[acyl-carrier-protein]: step 2/2. Functionally, catalyzes the radical-mediated insertion of two sulfur atoms into the C-6 and C-8 positions of the octanoyl moiety bound to the lipoyl domains of lipoate-dependent enzymes, thereby converting the octanoylated domains into lipoylated derivatives. In Nocardia farcinica (strain IFM 10152), this protein is Lipoyl synthase.